The chain runs to 718 residues: Myeloperoxidase (718 aa).

The signal sequence occupies residues 1 to 15 (MKLLLALAGLLAPLA). A propeptide spanning residues 16-138 (MLQTSNGATP…SSGCAYQDVR (123 aa)) is cleaved from the precursor. Residue Asn-113 is glycosylated (N-linked (GlcNAc...) asparagine). An intrachain disulfide couples Cys-141 to Cys-154. Asp-234 contacts heme b. His-235 acts as the Proton acceptor in catalysis. Asp-236 is a binding site for Ca(2+). Cystine bridges form between Cys-255–Cys-265 and Cys-259–Cys-283. Cysteine sulfenic acid (-SOH) is present on Cys-290. A glycan (N-linked (GlcNAc...) asparagine) is linked at Asn-297. Positions 308, 310, 312, and 314 each coordinate Ca(2+). Residues Asn-329 and Asn-365 are each glycosylated (N-linked (GlcNAc...) asparagine). A disulfide bridge links Cys-361 with Cys-372. Heme b contacts are provided by Glu-382 and Met-383. The N-linked (GlcNAc...) asparagine glycan is linked to Asn-457. His-476 lines the heme b pocket. Intrachain disulfides connect Cys-580–Cys-637 and Cys-678–Cys-704. Residue Asn-711 is glycosylated (N-linked (GlcNAc...) asparagine).

It belongs to the peroxidase family. XPO subfamily. Homodimer; disulfide-linked. Each monomer consists of a light and a heavy chain. Found in a complex with CP and LTF; interacts directly with CP, which protects CP antioxidant properties by MPO. The cofactor is Ca(2+). Heme b serves as cofactor.

It is found in the lysosome. The enzyme catalyses chloride + H2O2 + H(+) = hypochlorous acid + H2O. Functionally, part of the host defense system of polymorphonuclear leukocytes. It is responsible for microbicidal activity against a wide range of organisms. In the stimulated PMN, MPO catalyzes the production of hypohalous acids, primarily hypochlorous acid in physiologic situations, and other toxic intermediates that greatly enhance PMN microbicidal activity. Mediates the proteolytic cleavage of alpha-1-microglobulin to form t-alpha-1-microglobulin, which potently inhibits oxidation of low density lipoprotein particles and limits vascular damage. The sequence is that of Myeloperoxidase (Mpo) from Mus musculus (Mouse).